Here is a 497-residue protein sequence, read N- to C-terminus: Transcription termination/antitermination protein NusA (497 aa).

The region spanning 135 to 200 (GKILTGIVKK…RGAQLFVTRS (66 aa)) is the S1 motif domain. The 71-residue stretch at 302-372 (RHTIDIAVDS…LKIDQKISNI (71 aa)) folds into the KH domain. 2 consecutive repeat copies span residues 364–414 (KIDQ…KKAL) and 439–489 (GMNQ…RNIC). Positions 364–489 (KIDQKISNIL…MLIMAARNIC (126 aa)) are 2 X 51 AA approximate repeats.

It belongs to the NusA family. Monomer. Binds directly to the core enzyme of the DNA-dependent RNA polymerase and to nascent RNA.

The protein resides in the cytoplasm. In terms of biological role, participates in both transcription termination and antitermination. This Buchnera aphidicola subsp. Baizongia pistaciae (strain Bp) protein is Transcription termination/antitermination protein NusA.